A 164-amino-acid polypeptide reads, in one-letter code: Cyclic pyranopterin monophosphate synthase (164 aa).

Residues 77–79 and 115–116 contribute to the substrate site; these read LCH and ME. The active site involves D130.

This sequence belongs to the MoaC family. In terms of assembly, homohexamer; trimer of dimers.

It catalyses the reaction (8S)-3',8-cyclo-7,8-dihydroguanosine 5'-triphosphate = cyclic pyranopterin phosphate + diphosphate. It participates in cofactor biosynthesis; molybdopterin biosynthesis. In terms of biological role, catalyzes the conversion of (8S)-3',8-cyclo-7,8-dihydroguanosine 5'-triphosphate to cyclic pyranopterin monophosphate (cPMP). This chain is Cyclic pyranopterin monophosphate synthase, found in Sinorhizobium medicae (strain WSM419) (Ensifer medicae).